The chain runs to 320 residues: 2-oxoglutarate-dependent dioxygenase thnC (320 aa).

The Fe2OG dioxygenase domain occupies 174–278; it reads PLVQMKLIRY…HSCATFWHGD (105 aa). Residues H199, D201, and H258 each contribute to the Fe cation site. R268 provides a ligand contact to 2-oxoglutarate.

Belongs to the iron/ascorbate-dependent oxidoreductase family. Fe(2+) is required as a cofactor.

The catalysed reaction is trihazone A + 2-oxoglutarate + O2 + H(+) = trihazone D + succinate + 2 CO2 + H2O. It participates in secondary metabolite biosynthesis. 2-oxoglutarate-dependent dioxygenase; part of the gene cluster that produces the tetronate natural products trihazones. ThnC catalyzes the oxidative decarboxylation of trihazone A to trihazone D. The C4 hydrogen is first abstracted by the iron-oxo species generated in ThnC to give a tertiary radical at C4. This is followed by decarboxylation and removal of the second electron by the FeIII-OH center to give trihazone D. The pathway begins with the formation of trihazone A by the hybrid PKS-NRPS synthetase thnA and the trans-enoyl reductase thnE. Trihazone A is further decarboxylated by the 2-oxoglutarate-dependent dioxygenase thnC to produce trihazone D. The function of the FAD-dependent monooxygenase thnD has still to be identified. This Trichoderma harzianum (Hypocrea lixii) protein is 2-oxoglutarate-dependent dioxygenase thnC.